We begin with the raw amino-acid sequence, 277 residues long: Putative pyruvate, phosphate dikinase regulatory protein (277 aa).

151–158 (GISRTSKT) is an ADP binding site.

It belongs to the pyruvate, phosphate/water dikinase regulatory protein family. PDRP subfamily.

The enzyme catalyses N(tele)-phospho-L-histidyl/L-threonyl-[pyruvate, phosphate dikinase] + ADP = N(tele)-phospho-L-histidyl/O-phospho-L-threonyl-[pyruvate, phosphate dikinase] + AMP + H(+). The catalysed reaction is N(tele)-phospho-L-histidyl/O-phospho-L-threonyl-[pyruvate, phosphate dikinase] + phosphate + H(+) = N(tele)-phospho-L-histidyl/L-threonyl-[pyruvate, phosphate dikinase] + diphosphate. Bifunctional serine/threonine kinase and phosphorylase involved in the regulation of the pyruvate, phosphate dikinase (PPDK) by catalyzing its phosphorylation/dephosphorylation. The polypeptide is Putative pyruvate, phosphate dikinase regulatory protein (Alkaliphilus oremlandii (strain OhILAs) (Clostridium oremlandii (strain OhILAs))).